Here is a 107-residue protein sequence, read N- to C-terminus: Iron-sulfur cluster assembly protein CyaY (107 aa).

It belongs to the frataxin family.

In terms of biological role, involved in iron-sulfur (Fe-S) cluster assembly. May act as a regulator of Fe-S biogenesis. This is Iron-sulfur cluster assembly protein CyaY from Yersinia intermedia.